The primary structure comprises 95 residues: Opiscorpine-3 (95 aa).

A signal peptide spans 1–19 (MNNKLTALIFLGLLAIASC). Residues 55-95 (EFMCVANVDMTKSCDTHCQKASGEKGYCHGTKCKCGVPLSY) enclose the BetaSPN-type CS-alpha/beta domain. Disulfide bonds link Cys-58–Cys-82, Cys-68–Cys-87, and Cys-72–Cys-89.

This sequence belongs to the long chain scorpion toxin family. Class 3 subfamily. In terms of tissue distribution, expressed by the venom gland.

Its subcellular location is the secreted. In terms of biological role, has antimicrobial activity against yeasts and bacteria. This is Opiscorpine-3 from Opistophthalmus carinatus (African yellow leg scorpion).